Reading from the N-terminus, the 121-residue chain is Neuromedin-B (121 aa).

The first 24 residues, 1–24 (MTLRARGARLLGGLLFFTLLAAGA), serve as a signal peptide directing secretion. Methionine amide is present on Met56. A propeptide spanning residues 60–121 (SLEPPNPSLL…RRLLVQTLEK (62 aa)) is cleaved from the precursor.

The protein belongs to the bombesin/neuromedin-B/ranatensin family. Higher expression in the central nervous system (CNS) than in peripheral tissues. Highest levels are found in the olfactory bulb. Relatively high levels in the CNS (including the cerebral cortex, cerebellum, spinal cord, medulla oblongata, midbrain, hypothalamus, hippocampus, and hypophysis) and in peripheral tissues such as the pancreas, adrenal gland, testis, ovary and cecum. Moderate levels are found in the rectum, heart and pons with low expression levels detected in the bone marrow and duodenum. Other tissues show no or low levels of expression.

The protein resides in the secreted. It localises to the cell projection. It is found in the neuron projection. In terms of biological role, stimulates smooth muscle contraction. Induces sighing by acting directly on the pre-Botzinger complex, a cluster of several thousand neurons in the ventrolateral medulla responsible for inspiration during respiratory activity. Contributes to the induction of sneezing following exposure to chemical irritants or allergens which causes release of NMB by nasal sensory neurons and activation of NMBR-expressing neurons in the sneeze-evoking region of the brainstem. These in turn activate neurons of the caudal ventral respiratory group, giving rise to the sneezing response. Contributes to induction of acute itch, possibly through activation of the NMBR receptor on dorsal root ganglion neurons. Increases expression of NMBR and steroidogenic mediators STAR, CYP11A1 and HSD3B1 in Leydig cells, induces secretion of testosterone by Leydig cells and also promotes Leydig cell proliferation. Plays a role in the innate immune response to influenza A virus infection by enhancing interferon alpha expression and reducing expression of IL6. Plays a role in CSF1-induced proliferation of osteoclast precursors by contributing to positive regulation of the expression of the CSF1 receptor CSF1R. The polypeptide is Neuromedin-B (NMB) (Sus scrofa (Pig)).